Consider the following 326-residue polypeptide: MNTSPGTVGSDPVILATAGYDHTVRFWQAHSGICTRTVQHQDSQVNALEITPDRTMIAAAGYQHIRMYDLNSNNPNPIISYDGVNKNVASVGFHEDGRWMYTGGEDCTARIWDLRSRNLQCQRIFQVNAPINCVCLHPNQAELIVGDQSGAIHIWDLKTDHNEQLIPEPEVSITSAHIDPDASYMAAVNSTGNCYVWNLTGGIGDEVTQLIPKTKIPAHTRYALQCRFSPDSTLLATCSADQTCKIWRTSNFSLMTELSIKSSNPGESSRGWMWGCAFSGDSQYIVTASSDNLARLWCVETGEIKREYGGHQKAVVCLAFNDSVLG.

An N-acetylmethionine modification is found at Met1. WD repeat units lie at residues 1-37 (MNTS…CTRT), 40-80 (HQDS…PIIS), 83-122 (GVNK…LQCQ), 126-165 (QVNA…NEQL), and 168-207 (EPEV…GDEV). Position 51 is a phosphothreonine (Thr51). Residue Lys86 forms a Glycyl lysine isopeptide (Lys-Gly) (interchain with G-Cter in SUMO3) linkage. Glycyl lysine isopeptide (Lys-Gly) (interchain with G-Cter in SUMO3) cross-links involve residues Lys215, Lys245, and Lys261. The stretch at 218-257 (AHTRYALQCRFSPDSTLLATCSADQTCKIWRTSNFSLMTE) is one WD 6 repeat. The stretch at 268-309 (SSRGWMWGCAFSGDSQYIVTASSDNLARLWCVETGEIKREYG) is one WD 7 repeat. Residue Lys305 forms a Glycyl lysine isopeptide (Lys-Gly) (interchain with G-Cter in SUMO3); alternate linkage. Glycyl lysine isopeptide (Lys-Gly) (interchain with G-Cter in ubiquitin); alternate cross-links involve residues Lys305 and Lys313. Residue Lys313 forms a Glycyl lysine isopeptide (Lys-Gly) (interchain with G-Cter in SUMO1); alternate linkage.

This sequence belongs to the WD repeat LST8 family. In terms of assembly, part of the mechanistic target of rapamycin complex 1 (mTORC1) which contains MTOR, MLST8 and RPTOR. mTORC1 associates with AKT1S1/PRAS40, which inhibits its activity. mTORC1 binds to and is inhibited by FKBP12-rapamycin. Within mTORC1, interacts directly with MTOR and RPTOR. Component of the mechanistic target of rapamycin complex 2 (mTORC2), consisting in two heterotretramers composed of MTOR, MLST8, RICTOR and MAPKAP1/SIN1. Contrary to mTORC1, mTORC2 does not bind to and is not sensitive to FKBP12-rapamycin. mTORC1 and mTORC2 associate with DEPTOR, which regulates their activity. Interacts with RHEB. Interacts with MEAK7. Interacts with SIK3. Interacts with SLC38A7; this interaction promotes the recruitment of mTORC1 to the lysosome and its subsequent activation. Phosphorylation at Thr-51 by CDK1 promotes ubiquitination by the SCF(FBXW7) complex, followed by degradation. Post-translationally, ubiquitination by the SCF(FBXW7) and SCF(FBXW11) complexes following phosphorylation at Thr-51 by CDK1, leads to its degradation by the proteasome. Ubiquitination at Lys-305 and Lys-313 by TRAF2 via 'Lys-63'-linked polyubiquitin chains inhibits formation of the mTORC2 complex, while promoting formation of the mTORC1 complex: ubiquitination disrupts the interaction between MLST8 and MAPKAP1/SIN1 to favor mTORC1 assembly. Deubiquitination at Lys-305 and Lys-313 by OTUD7B promotes MLST8 interaction with MAPKAP1/SIN1, facilitating mTORC2 assembly. In terms of processing, sumoylation with SUMO1, SUMO2 and SUMO3 promotes assembly of both mTORC1 and mTORC2 complexes.

It localises to the lysosome membrane. The protein localises to the cytoplasm. In terms of biological role, subunit of both mTORC1 and mTORC2, which regulates cell growth and survival in response to nutrient and hormonal signals. mTORC1 is activated in response to growth factors or amino acids. In response to nutrients, mTORC1 is recruited to the lysosome membrane and promotes protein, lipid and nucleotide synthesis by phosphorylating several substrates, such as ribosomal protein S6 kinase (RPS6KB1 and RPS6KB2) and EIF4EBP1 (4E-BP1). In the same time, it inhibits catabolic pathways by phosphorylating the autophagy initiation components ULK1 and ATG13, as well as transcription factor TFEB, a master regulators of lysosomal biogenesis and autophagy. The mTORC1 complex is inhibited in response to starvation and amino acid depletion. Within mTORC1, MLST8 interacts directly with MTOR and enhances its kinase activity. In nutrient-poor conditions, stabilizes the MTOR-RPTOR interaction and favors RPTOR-mediated inhibition of MTOR activity. As part of the mTORC2 complex, transduces signals from growth factors to pathways involved in proliferation, cytoskeletal organization, lipogenesis and anabolic output. mTORC2 is also activated by growth factors, but seems to be nutrient-insensitive. In response to growth factors, mTORC2 phosphorylates and activates AGC protein kinase family members, including AKT (AKT1, AKT2 and AKT3), PKC (PRKCA, PRKCB and PRKCE) and SGK1. mTORC2 functions upstream of Rho GTPases to regulate the actin cytoskeleton, probably by activating one or more Rho-type guanine nucleotide exchange factors. mTORC2 promotes the serum-induced formation of stress-fibers or F-actin. mTORC2 plays a critical role in AKT1 activation by mediating phosphorylation of different sites depending on the context, such as 'Thr-450', 'Ser-473', 'Ser-477' or 'Thr-479', facilitating the phosphorylation of the activation loop of AKT1 on 'Thr-308' by PDPK1/PDK1 which is a prerequisite for full activation. mTORC2 regulates the phosphorylation of SGK1 at 'Ser-422'. mTORC2 also modulates the phosphorylation of PRKCA on 'Ser-657'. Within mTORC2, MLST8 acts as a bridge between MAPKAP1/SIN1 and MTOR. In Bos taurus (Bovine), this protein is Target of rapamycin complex subunit LST8.